Here is a 183-residue protein sequence, read N- to C-terminus: uncharacterized protein (183 aa).

Transmembrane regions (helical) follow at residues 13–35, 60–82, 117–139, and 149–171; these read KALL…LTYS, LLIL…KLRF, FEPV…YAIF, and LLFY…LYLS.

It is found in the cell membrane. This is an uncharacterized protein from Archaeoglobus fulgidus (strain ATCC 49558 / DSM 4304 / JCM 9628 / NBRC 100126 / VC-16).